Reading from the N-terminus, the 604-residue chain is Ras guanine nucleotide exchange factor H (604 aa).

Positions 1 to 26 (MSNTNINVQSSTPKKSLGSSQYSLAG) are enriched in polar residues. Residues 1-61 (MSNTNINVQS…QENSIDDSGS (61 aa)) form a disordered region. A compositionally biased stretch (low complexity) spans 27 to 49 (SSSSNLNNINNNNNNNNNNNNNS). Positions 50 to 61 (TGQENSIDDSGS) are enriched in polar residues. A LisH domain is found at 115-147 (NDTMLLKLIMQYFHEENLTTSLKKIQEETKVQF). Residues 221–335 (PDGTIKAATF…AVINLKIENY (115 aa)) form the N-terminal Ras-GEF domain. One can recognise a Ras-GEF domain in the interval 365-591 (DEEEIARQLC…EQPQLTLDLS (227 aa)).

As to quaternary structure, component of the Sca1 complex composed of at least gefA, gefH, scaA, phr, and the protein phosphatase 2A subunits pppA and pho2B. Interacts directly with gefA and phr.

The protein resides in the cell membrane. In terms of biological role, promotes the exchange of Ras-bound GDP by GTP. Component of the Sca1 complex, a regulator of cell motility, chemotaxis and signal relay. The Sca1 complex is recruited to the plasma membrane in a chemoattractant- and F-actin-dependent manner and is enriched at the leading edge of chemotaxing cells where it regulates F-actin dynamics and signal relay by controlling the activation of rasC and the downstream target of rapamycin complex 2 (TORC2)-Akt/protein kinase B (PKB) pathway. This Dictyostelium discoideum (Social amoeba) protein is Ras guanine nucleotide exchange factor H (gefH).